We begin with the raw amino-acid sequence, 155 residues long: Ribosomal RNA large subunit methyltransferase H (155 aa).

S-adenosyl-L-methionine is bound by residues L73, G104, and 123–128 (LSPLTL).

Belongs to the RNA methyltransferase RlmH family. As to quaternary structure, homodimer.

The protein resides in the cytoplasm. It carries out the reaction pseudouridine(1915) in 23S rRNA + S-adenosyl-L-methionine = N(3)-methylpseudouridine(1915) in 23S rRNA + S-adenosyl-L-homocysteine + H(+). Specifically methylates the pseudouridine at position 1915 (m3Psi1915) in 23S rRNA. The protein is Ribosomal RNA large subunit methyltransferase H of Pseudomonas aeruginosa (strain LESB58).